The sequence spans 310 residues: Pyrimidine-specific ribonucleoside hydrolase RihA (310 aa).

His240 is an active-site residue.

Belongs to the IUNH family. RihA subfamily.

Functionally, hydrolyzes cytidine or uridine to ribose and cytosine or uracil, respectively. This is Pyrimidine-specific ribonucleoside hydrolase RihA from Photobacterium profundum (strain SS9).